Consider the following 216-residue polypeptide: A-type ATP synthase subunit D (216 aa).

It belongs to the V-ATPase D subunit family. In terms of assembly, has multiple subunits with at least A(3), B(3), C, D, E, F, H, I and proteolipid K(x). The N-terminus is blocked.

The protein resides in the cell membrane. In terms of biological role, component of the A-type ATP synthase that produces ATP from ADP in the presence of a proton gradient across the membrane. The sequence is that of A-type ATP synthase subunit D from Sulfurisphaera tokodaii (strain DSM 16993 / JCM 10545 / NBRC 100140 / 7) (Sulfolobus tokodaii).